Reading from the N-terminus, the 417-residue chain is Serine hydroxymethyltransferase (417 aa).

Residues Leu-121 and Gly-125–Leu-127 each bind (6S)-5,6,7,8-tetrahydrofolate. Lys-229 carries the post-translational modification N6-(pyridoxal phosphate)lysine. Ser-354–Phe-356 is a binding site for (6S)-5,6,7,8-tetrahydrofolate.

The protein belongs to the SHMT family. In terms of assembly, homodimer. Pyridoxal 5'-phosphate is required as a cofactor.

It localises to the cytoplasm. It carries out the reaction (6R)-5,10-methylene-5,6,7,8-tetrahydrofolate + glycine + H2O = (6S)-5,6,7,8-tetrahydrofolate + L-serine. It functions in the pathway one-carbon metabolism; tetrahydrofolate interconversion. Its pathway is amino-acid biosynthesis; glycine biosynthesis; glycine from L-serine: step 1/1. Its function is as follows. Catalyzes the reversible interconversion of serine and glycine with tetrahydrofolate (THF) serving as the one-carbon carrier. This reaction serves as the major source of one-carbon groups required for the biosynthesis of purines, thymidylate, methionine, and other important biomolecules. Also exhibits THF-independent aldolase activity toward beta-hydroxyamino acids, producing glycine and aldehydes, via a retro-aldol mechanism. This is Serine hydroxymethyltransferase from Stutzerimonas stutzeri (strain A1501) (Pseudomonas stutzeri).